A 188-amino-acid polypeptide reads, in one-letter code: dCTP deaminase (188 aa).

Residues 111 to 116, 135 to 137, Gln-156, Tyr-170, and Gln-180 contribute to the dCTP site; these read KSTYAR and TLE. Glu-137 (proton donor/acceptor) is an active-site residue.

It belongs to the dCTP deaminase family. As to quaternary structure, homotrimer.

The catalysed reaction is dCTP + H2O + H(+) = dUTP + NH4(+). It functions in the pathway pyrimidine metabolism; dUMP biosynthesis; dUMP from dCTP (dUTP route): step 1/2. Its function is as follows. Catalyzes the deamination of dCTP to dUTP. The sequence is that of dCTP deaminase from Laribacter hongkongensis (strain HLHK9).